A 399-amino-acid chain; its full sequence is Protein DDI1 homolog 2 (399 aa).

One can recognise a Ubiquitin-like domain in the interval 1 to 81 (MLLTVYCVRR…VILRQKENAD (81 aa)). Residues 99–134 (IAVPGTSSPRQRQPPGTQQSHSSPGEITSSPQGLDN) are disordered. Positions 103-131 (GTSSPRQRQPPGTQQSHSSPGEITSSPQG) are enriched in polar residues. A Phosphothreonine modification is found at Thr-104. Residues Ser-106, Ser-121, Ser-128, Ser-150, and Ser-194 each carry the phosphoserine modification. Asp-252 is a catalytic residue. Positions 376–395 (EEIADQELAEALQKSAEDAE) match the Ubiquitin-binding motif.

It belongs to the DDI1 family. Homodimer. Interacts with MCM6; PCNA; PSMD4; PSMD8; RPA2 and RPN2. Interacts with RTF2.

It localises to the cytoplasm. The protein resides in the cytosol. Its subcellular location is the chromosome. Its function is as follows. Aspartic protease that mediates the cleavage of NFE2L1/NRF1 at 'Leu-104', thereby promoting release of NFE2L1/NRF1 from the endoplasmic reticulum membrane. Ubiquitination of NFE2L1/NRF1 is a prerequisite for cleavage, suggesting that DDI2 specifically recognizes and binds ubiquitinated NFE2L1/NRF1. Seems to act as a proteasomal shuttle which links the proteasome and replication fork proteins like RTF2. Required, with DDI1, for cellular survival following replication stress. Together or redudantly with DDI1, removes RTF2 from stalled forks to allow cell cycle progression after replication stress and maintains genome integrity. The polypeptide is Protein DDI1 homolog 2 (Homo sapiens (Human)).